Here is a 558-residue protein sequence, read N- to C-terminus: Laccase-10 (558 aa).

The N-terminal stretch at 1-22 (MVFPIRILVLFALLAFPACVHG) is a signal peptide. 2 Plastocyanin-like domains span residues 30 to 146 (NVVT…PKLG) and 157 to 308 (EEVI…YSGT). N-linked (GlcNAc...) asparagine glycosylation occurs at Asn-76. Cu cation-binding residues include His-80 and His-82. Asn-112 carries an N-linked (GlcNAc...) asparagine glycan. The Cu cation site is built by His-125 and His-127. N-linked (GlcNAc...) asparagine glycans are attached at residues Asn-185, Asn-296, Asn-323, Asn-373, Asn-383, Asn-400, and Asn-441. A Plastocyanin-like 3 domain is found at 408-542 (DFPAKPRRVF…KMAFLVENGK (135 aa)). His-459, His-462, His-464, His-521, Cys-522, His-523, and His-527 together coordinate Cu cation. N-linked (GlcNAc...) asparagine glycosylation occurs at Asn-545.

Belongs to the multicopper oxidase family. The cofactor is Cu cation. Ubiquitous, with lower levels in siliques.

It localises to the secreted. The protein localises to the extracellular space. It is found in the apoplast. The catalysed reaction is 4 hydroquinone + O2 = 4 benzosemiquinone + 2 H2O. In terms of biological role, lignin degradation and detoxification of lignin-derived products. The polypeptide is Laccase-10 (LAC10) (Arabidopsis thaliana (Mouse-ear cress)).